The sequence spans 196 residues: Imidazole glycerol phosphate synthase subunit HisH (196 aa).

A Glutamine amidotransferase type-1 domain is found at Lys2–Arg196. Cys76 (nucleophile) is an active-site residue. Catalysis depends on residues His175 and Glu177.

As to quaternary structure, heterodimer of HisH and HisF.

The protein resides in the cytoplasm. The enzyme catalyses 5-[(5-phospho-1-deoxy-D-ribulos-1-ylimino)methylamino]-1-(5-phospho-beta-D-ribosyl)imidazole-4-carboxamide + L-glutamine = D-erythro-1-(imidazol-4-yl)glycerol 3-phosphate + 5-amino-1-(5-phospho-beta-D-ribosyl)imidazole-4-carboxamide + L-glutamate + H(+). It carries out the reaction L-glutamine + H2O = L-glutamate + NH4(+). It functions in the pathway amino-acid biosynthesis; L-histidine biosynthesis; L-histidine from 5-phospho-alpha-D-ribose 1-diphosphate: step 5/9. In terms of biological role, IGPS catalyzes the conversion of PRFAR and glutamine to IGP, AICAR and glutamate. The HisH subunit catalyzes the hydrolysis of glutamine to glutamate and ammonia as part of the synthesis of IGP and AICAR. The resulting ammonia molecule is channeled to the active site of HisF. In Sulfurisphaera tokodaii (strain DSM 16993 / JCM 10545 / NBRC 100140 / 7) (Sulfolobus tokodaii), this protein is Imidazole glycerol phosphate synthase subunit HisH.